A 430-amino-acid polypeptide reads, in one-letter code: Elongation factor 1-alpha (430 aa).

The region spanning 7 to 219 (KPHVNIVFIG…DQIPEPEKPV (213 aa)) is the tr-type G domain. Residues 16 to 23 (GHVDHGKS) are G1. Residue 16 to 23 (GHVDHGKS) coordinates GTP. Ser-23 provides a ligand contact to Mg(2+). The interval 70-74 (GITID) is G2. A G3 region spans residues 91-94 (DAPG). Residues 91–95 (DAPGH) and 146–149 (NKMD) contribute to the GTP site. A G4 region spans residues 146–149 (NKMD). The interval 183 to 185 (SAW) is G5.

The protein belongs to the TRAFAC class translation factor GTPase superfamily. Classic translation factor GTPase family. EF-Tu/EF-1A subfamily.

Its subcellular location is the cytoplasm. The catalysed reaction is GTP + H2O = GDP + phosphate + H(+). In terms of biological role, GTP hydrolase that promotes the GTP-dependent binding of aminoacyl-tRNA to the A-site of ribosomes during protein biosynthesis. This is Elongation factor 1-alpha from Pyrococcus woesei.